The chain runs to 523 residues: Volkensin (523 aa).

Residues Y74, Y113, E162, and R165 contribute to the active site. Residue 111 to 113 (GGY) coordinates AMP. 2 disulfides stabilise this stretch: C245–C269 and C285–C304. The propeptide at 251–265 (QSDSPLVIRSFVDRN) is linker peptide. Residues 270-397 (PSGETTAFIV…YAASQAWRVT (128 aa)) form the Ricin B-type lectin 1 domain. A carbohydrate contacts are provided by residues 287-291 (DVKVE), Q300, K305, and N311. An intrachain disulfide couples C328 to C343. A carbohydrate contacts are provided by N358 and N398. 2 N-linked (GlcNAc...) asparagine glycosylation sites follow: N358 and N398. The Ricin B-type lectin 2 domain occupies 400–523 (TVPTVTTIVG…HGNSNQQWFL (124 aa)). Intrachain disulfides connect C414-C427 and C453-C471.

In the N-terminal section; belongs to the ribosome-inactivating protein family. Type 2 RIP subfamily. In terms of assembly, disulfide-linked dimer of A and B chains. In terms of processing, N-glycosylated. Contains mannose and galactose. In terms of tissue distribution, expressed in roots (at protein level). Expressed in seeds (at protein level).

It carries out the reaction Endohydrolysis of the N-glycosidic bond at one specific adenosine on the 28S rRNA.. Its activity is regulated as follows. Hemagglutinating activity is inhibited by galactose and structurally related sugars. Its function is as follows. Has N-glycosidase activity and is responsible for inhibiting protein synthesis through the catalytic inactivation of 60S ribosomal subunits by removing a specific adenine of 28S rRNA. Inhibits GTP-dependent binding of EF2 (elongation factor 2) to ribosomes. Functionally, binds to cell receptors and probably facilitates the entry into the cell of the A chain. Also acts as a galactose-specific lectin responsible for cell agglutination. The polypeptide is Volkensin (Adenia volkensii (Kilyambiti plant)).